A 160-amino-acid chain; its full sequence is Putative UPF0479 protein YLR466C-A (160 aa).

A run of 2 helical transmembrane segments spans residues 39–59 (IVFC…KVLQ) and 136–156 (VPMI…ISQH).

It belongs to the UPF0479 family.

Its subcellular location is the membrane. This is Putative UPF0479 protein YLR466C-A from Saccharomyces cerevisiae (strain ATCC 204508 / S288c) (Baker's yeast).